Reading from the N-terminus, the 396-residue chain is Peroxisome proliferator-activated receptor delta (396 aa).

The interval 1 to 24 (MKEEIPPRSPILDEQPSTPLEHQE) is disordered. Polar residues predominate over residues 15–24 (QPSTPLEHQE). The segment at residues 28–102 (SVDCKICGDR…LGMSHNAIRF (75 aa)) is a DNA-binding region (nuclear receptor). NR C4-type zinc fingers lie at residues 31 to 51 (CKICGDRASGFHYGVHACEGC) and 68 to 90 (CDRNCKIQKKNRNKCQYCRFNKC). In terms of domain architecture, NR LBD spans 166 to 394 (FVIHDMDTLW…HPLLQEIYRD (229 aa)).

Belongs to the nuclear hormone receptor family. NR1 subfamily. As to quaternary structure, heterodimer with the retinoid X receptor. In terms of processing, 'Lys-48'-linked polyubiquitinated; leading to proteasomal degradation. Deubiquitinated and stabilized by OTUD3. In terms of tissue distribution, ubiquitous.

It is found in the nucleus. Ligand-activated transcription factor key mediator of energy metabolism in adipose tissues. Receptor that binds peroxisome proliferators such as hypolipidemic drugs and fatty acids. Has a preference for poly-unsaturated fatty acids, such as gamma-linoleic acid and eicosapentanoic acid. Once activated by a ligand, the receptor binds to promoter elements of target genes. Regulates the peroxisomal beta-oxidation pathway of fatty acids. Functions as a transcription activator for the acyl-CoA oxidase gene. Decreases expression of NPC1L1 once activated by a ligand. This is Peroxisome proliferator-activated receptor delta (ppard) from Xenopus laevis (African clawed frog).